The following is a 2513-amino-acid chain: Probable polyketide synthase 7 (2513 aa).

The Ketosynthase family 3 (KS3) domain maps to 11–441 (EKGVAIVGIG…GSNCCLLISE (431 aa)). Catalysis depends on for beta-ketoacyl synthase activity residues Cys181, His323, and His362. The acyl/malonyl transferase stretch occupies residues 632–665 (GVNPSFILGHSLGEISASYCSGMIDLDTFCYTVY). The For acyl/malonyl transferase activity role is filled by Ser642. The N-terminal hotdog fold stretch occupies residues 922 to 1044 (IDHLGISNSF…SNFQLLDHGN (123 aa)). Residues 922–1206 (IDHLGISNSF…CKSLIPIKDS (285 aa)) enclose the PKS/mFAS DH domain. The Proton acceptor; for dehydratase activity role is filled by His956. The C-terminal hotdog fold stretch occupies residues 1061 to 1206 (NLSKLTKNEL…CKSLIPIKDS (146 aa)). The active-site Proton donor; for dehydratase activity is the Asp1119. The Carrier domain maps to 2426–2503 (IGNKNIDELF…ISIKMILNSL (78 aa)). Ser2463 carries the O-(pantetheine 4'-phosphoryl)serine modification.

The cofactor is pantetheine 4'-phosphate.

Functionally, probable polyketide synthase. The polypeptide is Probable polyketide synthase 7 (pks7) (Dictyostelium discoideum (Social amoeba)).